A 177-amino-acid polypeptide reads, in one-letter code: Disulfide bond formation protein B (177 aa).

Residues Met1–Thr14 are Cytoplasmic-facing. The chain crosses the membrane as a helical span at residues Trp15–Tyr31. The Periplasmic segment spans residues Phe32–Val49. Cysteines 41 and 44 form a disulfide. The helical transmembrane segment at Ala50–Pro65 threads the bilayer. The Cytoplasmic portion of the chain corresponds to Lys66–Ile72. A helical membrane pass occupies residues Leu73–Ile90. Over Lys91 to Gln145 the chain is Periplasmic. A disulfide bond links Cys105 and Cys131. The helical transmembrane segment at Trp146–Ser164 threads the bilayer. Over Gln165–Arg177 the chain is Cytoplasmic.

The protein belongs to the DsbB family.

Its subcellular location is the cell inner membrane. Its function is as follows. Required for disulfide bond formation in some periplasmic proteins. Acts by oxidizing the DsbA protein. This chain is Disulfide bond formation protein B, found in Histophilus somni (strain 129Pt) (Haemophilus somnus).